The primary structure comprises 431 residues: Transcription factor Sp7 (431 aa).

The segment at 30–56 is disordered; the sequence is SSPLRDSTTLGKAGTKKPYSVGSDLSA. 2 positions are modified to N6-propionyllysine: Lys-41 and Lys-45. Residue Lys-58 forms a Glycyl lysine isopeptide (Lys-Gly) (interchain with G-Cter in ubiquitin) linkage. Disordered stretches follow at residues 71 to 115 and 154 to 260; these read TNGL…VPKG and TPTP…SGGY. The 9aaTAD signature appears at 156–164; the sequence is TPWWDMHPG. Positions 166–178 are enriched in gly residues; the sequence is NWLGGGQGQGDGL. Lys-230 is covalently cross-linked (Glycyl lysine isopeptide (Lys-Gly) (interchain with G-Cter in ubiquitin)). 3 consecutive C2H2-type zinc fingers follow at residues 294 to 318, 324 to 348, and 354 to 376; these read HSCHIPGCGKVYGKASHLKAHLRWH, FVCNWLFCGKRFTRSDELERHVRTH, and FTCLLCSKRFTRSDHLSKHQRTH. N6-propionyllysine is present on residues Lys-361 and Lys-371. Residues 367–431 form a disordered region; that stretch reads DHLSKHQRTH…SPEQSNLLEI (65 aa). Polar residues predominate over residues 403–412; that stretch reads SQTPRPSASP.

It belongs to the Sp1 C2H2-type zinc-finger protein family. In terms of assembly, interacts with RIOX1; the interaction is direct and inhibits transcription activator activity. Post-translationally, ubiquitination at leads to proteasomal degradation. SP7 is a short-live protein with an endogenous half-life of approximately 12 hours. In terms of processing, propionylated. Depropionylation at Lys-371 by SIRT7 activates transcription factor activity and positively regulates bone formation by osteoblasts. Restricted to bone-derived cell.

It localises to the nucleus. Transcriptional activator essential for osteoblast differentiation. Binds to SP1 and EKLF consensus sequences and to other G/C-rich sequences. The sequence is that of Transcription factor Sp7 (SP7) from Homo sapiens (Human).